Reading from the N-terminus, the 453-residue chain is Ribosomal protein uS12 methylthiotransferase RimO (453 aa).

One can recognise an MTTase N-terminal domain in the interval 5 to 120; it reads PKVGFVSLGC…VMQAVHSHLP (116 aa). Positions 14, 50, 79, 151, 155, and 158 each coordinate [4Fe-4S] cluster. The Radical SAM core domain maps to 137–382; that stretch reads LTPRHYAYLK…MEVAEEVSAR (246 aa). In terms of domain architecture, TRAM spans 385 to 453; it reads QRKVGKTLKV…ADGHDLWGEV (69 aa).

This sequence belongs to the methylthiotransferase family. RimO subfamily. [4Fe-4S] cluster is required as a cofactor.

It is found in the cytoplasm. It catalyses the reaction L-aspartate(89)-[ribosomal protein uS12]-hydrogen + (sulfur carrier)-SH + AH2 + 2 S-adenosyl-L-methionine = 3-methylsulfanyl-L-aspartate(89)-[ribosomal protein uS12]-hydrogen + (sulfur carrier)-H + 5'-deoxyadenosine + L-methionine + A + S-adenosyl-L-homocysteine + 2 H(+). Its function is as follows. Catalyzes the methylthiolation of an aspartic acid residue of ribosomal protein uS12. The chain is Ribosomal protein uS12 methylthiotransferase RimO from Burkholderia vietnamiensis (strain G4 / LMG 22486) (Burkholderia cepacia (strain R1808)).